A 594-amino-acid polypeptide reads, in one-letter code: Aspartate--tRNA(Asp/Asn) ligase (594 aa).

Glu-175 contacts L-aspartate. The aspartate stretch occupies residues Gln-199–Lys-202. Arg-221 provides a ligand contact to L-aspartate. ATP-binding positions include Arg-221 to Glu-223 and Gln-230. Residue His-446 participates in L-aspartate binding. Glu-491 contributes to the ATP binding site. Arg-498 provides a ligand contact to L-aspartate. Gly-543–Arg-546 lines the ATP pocket.

This sequence belongs to the class-II aminoacyl-tRNA synthetase family. Type 1 subfamily. As to quaternary structure, homodimer.

Its subcellular location is the cytoplasm. It catalyses the reaction tRNA(Asx) + L-aspartate + ATP = L-aspartyl-tRNA(Asx) + AMP + diphosphate. Functionally, aspartyl-tRNA synthetase with relaxed tRNA specificity since it is able to aspartylate not only its cognate tRNA(Asp) but also tRNA(Asn). Reaction proceeds in two steps: L-aspartate is first activated by ATP to form Asp-AMP and then transferred to the acceptor end of tRNA(Asp/Asn). In Thermodesulfovibrio yellowstonii (strain ATCC 51303 / DSM 11347 / YP87), this protein is Aspartate--tRNA(Asp/Asn) ligase.